A 280-amino-acid chain; its full sequence is Ribosomal RNA-processing protein 7 homolog A (280 aa).

The region spanning 59 to 159 (RTLFVLNVPP…TGIHKWISDY (101 aa)) is the RRM domain. S99 carries the post-translational modification Phosphoserine.

Belongs to the RRP7 family. In terms of assembly, part of the small subunit (SSU) processome, composed of more than 70 proteins and the RNA chaperone small nucleolar RNA (snoRNA) U3. Interacts with NOL6; required for NOL6 localization to nucleolus.

It is found in the nucleus. The protein localises to the nucleolus. The protein resides in the cell projection. Its subcellular location is the cilium. It localises to the cytoplasm. It is found in the cytoskeleton. The protein localises to the microtubule organizing center. The protein resides in the centrosome. Functionally, nucleolar protein that is involved in ribosomal RNA (rRNA) processing. Also plays a role in primary cilia resorption, and cell cycle progression in neurogenesis and neocortex development. Part of the small subunit (SSU) processome, first precursor of the small eukaryotic ribosomal subunit. During the assembly of the SSU processome in the nucleolus, many ribosome biogenesis factors, an RNA chaperone and ribosomal proteins associate with the nascent pre-rRNA and work in concert to generate RNA folding, modifications, rearrangements and cleavage as well as targeted degradation of pre-ribosomal RNA by the RNA exosome. In Pongo abelii (Sumatran orangutan), this protein is Ribosomal RNA-processing protein 7 homolog A (RRP7A).